Reading from the N-terminus, the 411-residue chain is Putative ion-transport protein YfeO (411 aa).

11 helical membrane-spanning segments follow: residues 9–29, 54–74, 99–119, 149–169, 186–206, 223–243, 258–278, 296–316, 322–342, 343–363, and 386–406; these read MLLLSLPALIIGVASSLVLIA, DSPFWIVGMLTLTGVVVGLII, ALPGLLLALIIGLAGGVSLGP, ILASAGTIGALFGTPVAAALI, LFAPLMAAAAGSLTTSLFFHP, IASGAIVAAIAIAAGMVAVWC, VLILGIGGFILGILGVIGGPL, LGAGDYFTLAVVKLAALVIAA, GGRIFPAVFIGAALGLMLHAH, VEAVPAAITVSCAILGLVLVV, and LLCIVMLPAWLLLAGKPLLAA.

This sequence belongs to the chloride channel (TC 2.A.49) family.

The protein localises to the cell membrane. In Salmonella choleraesuis (strain SC-B67), this protein is Putative ion-transport protein YfeO.